A 564-amino-acid chain; its full sequence is MPKVEIYKSILLEKIGKILTKSELVSVLEMAKAEICEFDTVNDKIKIEFNDTNRPDLWSCAGLARQIKTYLFGHLPLFKFFSMADNLQEFYGEILVSPEVFSIRPFIFGFLAKGVICNERMLETLIQLQEKLCHNYGQKRKRVAMGMYSSDLIEFPLSYTACNSDYRFIPLGMDREMSIEEINRVHSKGIEYSTILASFNKYPLLLDDKDKVLSYPPVINSHDIGALKVGDTDLFIEVTGTNLEATLLSLSVTACDLHDMGFEILPVKTIFPNETLFGKEIICPYYFQNMLEVNVDNVNKMLGSNFTANNMCLDLKKLGISAYFKELDKFYVIPPVYRNDFLHEVDVIEEIMIGMGLDSFKPELPKDFTLGRLSQIEEFSRKIKNLMIGMGFQEMIYNYLGSRTDFIEKMNIEGDDFLSVANPMTEGYEYIRGSIVSDLLKSESISSNFPYPHKIFEIGKVALKDLNSVDGTITYDNLAFLMADKEFSFNEINSLVSSLFYYLNIEFKLRESSKSLYIDGRGVDILINDTVLGGFGEVSPYILRNFGIMVPCCVLEINLNKLLN.

Positions 286–362 (YFQNMLEVNV…IGMGLDSFKP (77 aa)) constitute a B5 domain. Mg(2+) contacts are provided by D340, D346, E349, and E350.

This sequence belongs to the phenylalanyl-tRNA synthetase beta subunit family. Type 2 subfamily. In terms of assembly, tetramer of two alpha and two beta subunits. The cofactor is Mg(2+).

Its subcellular location is the cytoplasm. It catalyses the reaction tRNA(Phe) + L-phenylalanine + ATP = L-phenylalanyl-tRNA(Phe) + AMP + diphosphate + H(+). The protein is Phenylalanine--tRNA ligase beta subunit of Borrelia turicatae (strain 91E135).